A 174-amino-acid chain; its full sequence is N5-carboxyaminoimidazole ribonucleotide mutase (174 aa).

Residues Ser-16, Asp-19, and Arg-46 each coordinate substrate.

This sequence belongs to the AIR carboxylase family. Class I subfamily.

The catalysed reaction is 5-carboxyamino-1-(5-phospho-D-ribosyl)imidazole + H(+) = 5-amino-1-(5-phospho-D-ribosyl)imidazole-4-carboxylate. It participates in purine metabolism; IMP biosynthesis via de novo pathway; 5-amino-1-(5-phospho-D-ribosyl)imidazole-4-carboxylate from 5-amino-1-(5-phospho-D-ribosyl)imidazole (N5-CAIR route): step 2/2. Catalyzes the conversion of N5-carboxyaminoimidazole ribonucleotide (N5-CAIR) to 4-carboxy-5-aminoimidazole ribonucleotide (CAIR). The protein is N5-carboxyaminoimidazole ribonucleotide mutase of Mycobacterium tuberculosis (strain CDC 1551 / Oshkosh).